Here is a 747-residue protein sequence, read N- to C-terminus: MSLLEQLARKRIEKSKGLLSADQSHSTSKSASLLERLHKNRETKDNNAETKRKDLKTLLAKDKVKRSDFTPNQHSVSLSLKLSALKKSNSDLEKQGKSVTLDSKENELPTKRKSPDDKLNLEESWKAIKEMNHYCFLKNDPCINQTDDFAFTNFIIKDKKNSLSTSIPLSSQNSSFLSLKKHNNELLGIFVPCNLPKTTRKVAIENFNRPSPDDIIQSAQLNAFNEKLENLNIKSVPKAEKKEPINLQTPPTESIDIHSFIATHPLNLTCLFLGDTNAGKSTLLGHLLYDLNEISMSSMRELQKKSSNLDPSSSNSFKVILDNTKTERENGFSMFKKVIQVENDLLPPSSTLTLIDTPGSIKYFNKETLNSILTFDPEVYVLVIDCNYDSWEKSLDGPNNQIYEILKVISYLNKNSACKKHLIILLNKADLISWDKHRLEMIQSELNYVLKENFQWTDAEFQFIPCSGLLGSNLNKTENITKSKYKSEFDSINYVPEWYEGPTFFSQLYLLVEHNMNKIETTLEEPFVGTILQSSVLQPIAEINYVSLKVLINSGYIQSGQTIEIHTQYEDFHYYGIVSRMKNSKQILETNTKNNISVGLNPDILEVLVKIHNTEDFTKKQFHIRKGDIIIHSRKTNTLSPNLPNTLKLLALRLIKLSIQTHALSDPVDLGSELLLYHNLTHNAVKLVKILGTNDISINPNQSLIVEVEIIEPDFALNVIDSKYITNNIVLTSIDHKVIAVGRIACQ.

The segment at lysine 14–lysine 51 is disordered. Residues alanine 21–alanine 31 show a composition bias toward polar residues. Over residues glutamate 35–lysine 51 the composition is skewed to basic and acidic residues. 2 positions are modified to phosphoserine: serine 88 and serine 90. The disordered stretch occupies residues asparagine 89–aspartate 117. In terms of domain architecture, tr-type G spans proline 265–threonine 503. The interval glycine 274 to serine 281 is G1. Glycine 274–serine 281 contacts GTP. The interval glycine 331–phenylalanine 335 is G2. Residues aspartate 356 to glycine 359 form a G3 region. GTP contacts are provided by residues aspartate 356–serine 360 and asparagine 427–aspartate 430. Residues asparagine 427–aspartate 430 are G4. The G5 stretch occupies residues serine 467–leucine 469.

It belongs to the TRAFAC class translation factor GTPase superfamily. Classic translation factor GTPase family. As to quaternary structure, interacts with the exosome and with the SKI complex composed of at least SKI2, SKI3 and SKI8. Interacts directly with SKI3 and SKI8.

The protein resides in the cytoplasm. In terms of biological role, represses the expression of non-poly(A) mRNAs like L-A or M viruses and is therefore involved in antiviral system. Mediates interactions via its N-terminus between the exosome and the SKI complex which operate in the 3'-to-5' mRNA-decay pathway. By interacting with NAM7, is also required for nonsense-mediated 3'-to-5' mRNA-decay (NMD). May recognize a stalled 80S ribosome at the 3'-end of a nonstop mRNA which leads to the recruitment of the exosome and SKI complexes to the mRNAs to be degraded. In Saccharomyces cerevisiae (strain ATCC 204508 / S288c) (Baker's yeast), this protein is Superkiller protein 7 (SKI7).